The following is a 275-amino-acid chain: Chlorophyll a-b binding protein 3, chloroplastic (275 aa).

Residue tryptophan 58 participates in chlorophyll b binding. Chlorophyll a-binding residues include phenylalanine 78, serine 84, and glutamate 102. Chlorophyll b-binding residues include arginine 107, isoleucine 142, glutamate 169, and arginine 172. Residues lysine 226, glutamate 227, asparagine 230, arginine 232, glutamine 244, and histidine 259 each coordinate chlorophyll a. Residues 233-253 (LAMLAILGYFIQGLVTGVGPY) form a helical membrane-spanning segment.

Belongs to the light-harvesting chlorophyll a/b-binding (LHC) protein family. As to quaternary structure, the LHC complex consists of chlorophyll a-b binding proteins. It depends on Binds at least 14 chlorophylls (8 Chl-a and 6 Chl-b) and carotenoids such as lutein and neoxanthin. as a cofactor. Post-translationally, photoregulated by reversible phosphorylation of its threonine residues.

It is found in the plastid. Its subcellular location is the chloroplast thylakoid membrane. In terms of biological role, the light-harvesting complex (LHC) functions as a light receptor, it captures and delivers excitation energy to photosystems with which it is closely associated. Its function is as follows. May channel protons produced in the catalytic Mn center of water oxidation into the thylakoid lumen. The polypeptide is Chlorophyll a-b binding protein 3, chloroplastic (Pisum sativum (Garden pea)).